A 433-amino-acid polypeptide reads, in one-letter code: MSLVRTRFAPSPTGYLHIGGARTALFNWLFARKMGGTFILRIEDTDNARNTEEATRAIFTGMEWLGLDWDEGPMKGGDCGPYFQSQRNDIYDAYFKKLQDAGRVYEDEGAWRFRFDRSKPVTFHDLICGNITIDYRDASNTPDMAIRRADGSYIFHFVNVVDDIEMKMTHVIRGEDHIMNTPKHIQLFEAFGVTPPVFAHMPLILNQDGSKMSKRDVGAALGTYPEEGFLPEGVMNFLALLGWSPKDDTEIFSPQELIGRFSLEAVNHSAAKFDITKCRWVNQQHIIALPAEEFALRARPFCLKAGLPDSPILDAAIATVQTKVQTLAEVPDKIRFFFDLGMDPEAVSKVQPEALELLFKLADRLEQEPEWDGHELIGVLKAFAKENGVKMGAVMFPARVALTGLSGGPDLSSVFSLLGREETVRRIRSFSLD.

The short motif at 10–20 is the 'HIGH' region element; that stretch reads PSPTGYLHIGG. The 'KMSKS' region motif lies at 211–215; that stretch reads KMSKR. Lys-214 is an ATP binding site.

Belongs to the class-I aminoacyl-tRNA synthetase family. Glutamate--tRNA ligase type 1 subfamily. In terms of assembly, monomer.

It is found in the cytoplasm. The catalysed reaction is tRNA(Glu) + L-glutamate + ATP = L-glutamyl-tRNA(Glu) + AMP + diphosphate. Its function is as follows. Catalyzes the attachment of glutamate to tRNA(Glu) in a two-step reaction: glutamate is first activated by ATP to form Glu-AMP and then transferred to the acceptor end of tRNA(Glu). The protein is Glutamate--tRNA ligase of Akkermansia muciniphila (strain ATCC BAA-835 / DSM 22959 / JCM 33894 / BCRC 81048 / CCUG 64013 / CIP 107961 / Muc).